We begin with the raw amino-acid sequence, 307 residues long: Cuticle collagen 36 (307 aa).

Disordered regions lie at residues 76–102 (TRSR…GGPT) and 116–307 (QQGP…PPGY). Gly residues predominate over residues 86–102 (EGSGSGGSGSGGYGGPT). Triple-helical region stretches follow at residues 89–105 (GSGG…TGAG), 118–150 (GPAG…EGSI), 167–187 (GPQG…KGKS), 194–226 (GKNG…PGRV), 231–257 (GAAG…AGLT), and 260–295 (GGQG…EGSC). Residues 157–168 (PSEPCIICPPGP) show a composition bias toward pro residues. The span at 186–196 (KSQERAADGKN) shows a compositional bias: basic and acidic residues. A compositionally biased stretch (pro residues) spans 202–220 (IGPPGPPGGVGEPGPPGPA). The segment covering 231–242 (GAAGPAGPRGVK) has biased composition (low complexity). Positions 258–278 (EIGGQGPPGDAGGPGPVGGQG) are enriched in gly residues. Residues 279 to 288 (PPGPQGPQGP) show a composition bias toward pro residues.

The protein belongs to the cuticular collagen family. In terms of assembly, collagen polypeptide chains are complexed within the cuticle by disulfide bonds and other types of covalent cross-links.

Functionally, nematode cuticles are composed largely of collagen-like proteins. The cuticle functions both as an exoskeleton and as a barrier to protect the worm from its environment. The chain is Cuticle collagen 36 (col-36) from Caenorhabditis elegans.